The chain runs to 536 residues: DEAD-box ATP-dependent RNA helicase 41 (536 aa).

Positions 1 to 10 (MEQEENHSAD) are enriched in basic and acidic residues. Positions 1–25 (MEQEENHSADHLSAQPGNGNELEES) are disordered. Residues 40-69 (GEPRCVICGRYGEYICDQTDDDICSVECKT) form an HIT-type zinc finger. Positions 137 to 165 (MCFSSSGLPEKLVLNLEAAGYVMPTPVQM) match the Q motif motif. Positions 168–344 (IPSSICNRSL…NSLAKNAIHI (177 aa)) constitute a Helicase ATP-binding domain. 181 to 188 (ADTGSGKT) serves as a coordination point for ATP. The DEAD box signature appears at 293 to 296 (DEVD). The region spanning 355 to 518 (SVKQVVIWVE…PIPRELANSK (164 aa)) is the Helicase C-terminal domain.

This sequence belongs to the DEAD box helicase family. DDX59 subfamily.

It catalyses the reaction ATP + H2O = ADP + phosphate + H(+). The chain is DEAD-box ATP-dependent RNA helicase 41 from Oryza sativa subsp. japonica (Rice).